The primary structure comprises 213 residues: Orotate phosphoribosyltransferase (213 aa).

Position 26 (Lys26) interacts with 5-phospho-alpha-D-ribose 1-diphosphate. Residue 34-35 (FF) coordinates orotate. Residues 72 to 73 (YK), Arg99, Lys100, Lys103, His105, and 124 to 132 (DDVITAGTA) each bind 5-phospho-alpha-D-ribose 1-diphosphate. Residues Thr128 and Arg156 each contribute to the orotate site.

This sequence belongs to the purine/pyrimidine phosphoribosyltransferase family. PyrE subfamily. Homodimer. The cofactor is Mg(2+).

The enzyme catalyses orotidine 5'-phosphate + diphosphate = orotate + 5-phospho-alpha-D-ribose 1-diphosphate. The protein operates within pyrimidine metabolism; UMP biosynthesis via de novo pathway; UMP from orotate: step 1/2. Its function is as follows. Catalyzes the transfer of a ribosyl phosphate group from 5-phosphoribose 1-diphosphate to orotate, leading to the formation of orotidine monophosphate (OMP). This is Orotate phosphoribosyltransferase from Escherichia coli O157:H7.